We begin with the raw amino-acid sequence, 960 residues long: Anoctamin-1 (960 aa).

Residues 1-333 (MRVPEKYSTL…FGEKVGLYFA (333 aa)) are Cytoplasmic-facing. Residues 92-115 (TRSVRQDQPLPGKGSPVDAGSPEV) are disordered. Ser-196 carries the post-translational modification Phosphoserine. Residues 334–354 (WLGAYTQMLIPASIVGVIVFL) traverse the membrane as a helical segment. Topologically, residues 355 to 406 (YGCATVDENIPSMEMCDQRYNITMCPLCDKTCSYWKMSSACATARASHLFDN) are extracellular. 4 disulfides stabilise this stretch: Cys-370–Cys-395, Cys-379–Cys-836, Cys-382–Cys-386, and Cys-625–Cys-630. The chain crosses the membrane as a helical span at residues 407-427 (PATVFFSVFMALWAATFMEHW). Glu-425 provides a ligand contact to Ca(2+). The Cytoplasmic portion of the chain corresponds to 428-493 (KRKQMRLNYR…RDRFPAYFTN (66 aa)). A helical transmembrane segment spans residues 494–514 (LVSIIFMIAVTFAIVLGVIIY). The Extracellular portion of the chain corresponds to 515–542 (RISTAAALAMNSSPSVRSNIRVTVTATA). The chain crosses the membrane as a helical span at residues 543-563 (VIINLVVIILLDEVYGCIARW). The Cytoplasmic segment spans residues 564–581 (LTKIEVPKTEKSFEERLT). The chain crosses the membrane as a helical span at residues 582-602 (FKAFLLKFVNSYTPIFYVAFF). Topologically, residues 603–631 (KGRFVGRPGDYVYIFRSFRMEECAPGGCL) are extracellular. Residues 632 to 652 (MELCIQLSIIMLGKQLIQNNL) form a helical membrane-spanning segment. Ca(2+) is bound by residues Asn-651, Glu-654, Glu-702, Glu-705, Glu-734, and Asp-738. The Cytoplasmic portion of the chain corresponds to 653–699 (FEIGIPKMKKFIRYLKLRRQSPSDREEYVKRKQRYEVDFNLEPFAGL). A run of 2 helical transmembrane segments spans residues 700–720 (TPEY…VASF) and 721–741 (PLAP…DAKK). Topologically, residues 742–758 (FVTELRRPVAIRAKDIG) are cytoplasmic. Residues 759 to 779 (IWYNILRGVGKLAVIINAFVI) traverse the membrane as a helical segment. Over 780-866 (SFTSDFIPRL…FWAVLAARLA (87 aa)) the chain is Extracellular. Residue Asn-806 is glycosylated (N-linked (GlcNAc...) asparagine). The helical transmembrane segment at 867 to 887 (FVIVFQNLVMFMSDFVDWVIP) threads the bilayer. Ca(2+)-binding residues include Asp-883 and Asp-888. At 888 to 960 (DIPKDISQQI…PSYEYHGDAL (73 aa)) the chain is on the cytoplasmic side. The disordered stretch occupies residues 928 to 960 (PRDVPCNNHSPTTHPEAGDGSPVPSYEYHGDAL).

The protein belongs to the anoctamin family. Homodimer. Interacts with CFTR. Interacts with TRPV4. In terms of tissue distribution, expressed at the apical surface of the vomeronasal epithelium (at protein level). Expressed in the lateral and septal nasal glands (at protein level). Highly expressed in pulmonary bronchiole epithelial cells, pancreatic and submandibular gland acinar cells, kidney proximal tubule, all retinal cell layers, most sensory cells of dorsal root ganglia, Leydig cells and spermatocytes (at protein level). In the dorsal root ganglia, detected in small-diameter nociceptive neurons and in larger myelinated neurons (at protein level). In the dorsal root ganglia, expressed in MrgprA3-positive neurons (at protein level). In the developing brain, highly expressed in the ventricular zone and subventricular zone at 12.5 dpc and 14.5 dpc where it is detected in radial glial cells but not in neurons with expression dramatically decreased at P1 (at protein level). Highly expressed in the endometrial stroma (at protein level). In taste buds of the vallate papillae, expressed in the apical region of type I taste cells (at protein level). In the kidney, expressed in the collecting duct (at protein level). In the retina, strongly expressed in the outer and inner plexiform layers, weakly expressed in some somata in the inner nuclear layer and ganglion cell layer and not expressed in the outer nuclear layer (at protein level). Expressed in various retinal neurons including rod bipolar cells (at protein level). Expressed in eye, brain, myometrium and endometrium with higher levels in endometrium than myometrium in estrus and day 18 pregnant mice. Not detected in uterine smooth muscle cells. Expressed at high levels in the thyroid gland and gastrointestinal muscles.

It localises to the apical cell membrane. The protein localises to the presynapse. It catalyses the reaction chloride(in) = chloride(out). Its activity is regulated as follows. ATP and calmodulin are essential for its activation. Channel activity is inhibited by CFTR protein and by chloride inhibitors such as niflumic acid (NFA) and 4,4'-diisothiocyanatostilbene-2,2'-disulfonic acid (DIDS). Activated by heat with activation seen at temperatures above 44 degrees Celsius. Activated by BDNF in radial glial cells. Calcium-activated chloride channel (CaCC). Plays a role in transepithelial anion transport and smooth muscle contraction. Required for the normal functioning of the interstitial cells of Cajal (ICCs) which generate electrical pacemaker activity in gastrointestinal smooth muscles. Acts as a major contributor to basal and stimulated chloride conductance in airway epithelial cells and plays an important role in tracheal cartilage development. Required for CFTR activation by enhancing endoplasmic reticulum Ca(2+) store release and is also required for CFTR membrane expression. Required for basal and ATP-dependent mucus secretion in airways and intestine, probably by controlling exocytosis of mucus-filled granules by providing Ca(2+) to an apical signaling compartment. Contributes to airway mucus expression induced by interleukins IL3 and IL8 and by the asthma-associated protein CLCA1 and is required for expression of mucin MUC5AC. However, was shown in another study not to be required for MUC5AC expression. Plays a role in the propagation of Ca(2+) waves in Kolliker's organ in the cochlea and contributes to the refinement of auditory brainstem circuitries prior to hearing onset. In vomeronasal sensory neurons, modulates spontaneous firing patterns in the absence of stimuli as well as the firing pattern of pheromone-evoked activity. Responsible for calcium-activated chloride channel activity in type I taste cells of the vallate papillae. Acts as a heat sensor in nociceptive neurons. In dorsal root ganglion neurons, plays a role in mediating non-histaminergic Mas-related G-protein coupled receptor (MRGPR)-dependent itching, acting as a downstream effector of MRGPRs. In the developing brain, required for the Ca(2+)-dependent process extension of radial glial cells. The polypeptide is Anoctamin-1 (Ano1) (Mus musculus (Mouse)).